We begin with the raw amino-acid sequence, 101 residues long: Integration host factor subunit beta (101 aa).

The protein belongs to the bacterial histone-like protein family. Heterodimer of an alpha and a beta chain.

Functionally, this protein is one of the two subunits of integration host factor, a specific DNA-binding protein that functions in genetic recombination as well as in transcriptional and translational control. The chain is Integration host factor subunit beta from Rhodopseudomonas palustris (strain BisB5).